Here is a 229-residue protein sequence, read N- to C-terminus: Putative germin-like protein 12-4 (229 aa).

A signal peptide spans 1–22 (MAASNFFLLTAFIALVATQAMA). Cysteines 32 and 47 form a disulfide. One can recognise a Cupin type-1 domain in the interval 62-217 (ANLDKPMDTT…AFQVDKKAMD (156 aa)). An N-linked (GlcNAc...) asparagine glycan is attached at Asn78. Positions 111, 113, 118, and 162 each coordinate Mn(2+).

It belongs to the germin family. In terms of assembly, oligomer (believed to be a pentamer but probably hexamer).

The protein resides in the secreted. Its subcellular location is the extracellular space. The protein localises to the apoplast. Functionally, may play a role in plant defense. Probably has no oxalate oxidase activity even if the active site is conserved. This is Putative germin-like protein 12-4 from Oryza sativa subsp. japonica (Rice).